Reading from the N-terminus, the 1697-residue chain is Neurexin-3a (1697 aa).

The N-terminal stretch at 1-23 (MNFFRFPVQLQLLISTVLGPCLG) is a signal peptide. The Laminin G-like 1 domain maps to 24 to 198 (LEFTGLQGQW…RVRMDIEGIC (175 aa)). At 24–1622 (LEFTGLQGQW…EVVRESSSTT (1599 aa)) the chain is on the extracellular side. The EGF-like 1 domain maps to 194–231 (IEGICMENPCENGGTCSVVDGEPLCDCSKTEYVGRFCN). 3 disulfides stabilise this stretch: cysteine 198–cysteine 209, cysteine 203–cysteine 218, and cysteine 220–cysteine 230. Laminin G-like domains lie at 258–455 (VATF…VFKC) and 462–654 (DPIS…KPSC). 3 residues coordinate Ca(2+): aspartate 304, leucine 321, and methionine 389. 5 disulfide bridges follow: cysteine 419/cysteine 455, cysteine 625/cysteine 654, cysteine 662/cysteine 673, cysteine 667/cysteine 682, and cysteine 684/cysteine 694. The 38-residue stretch at 658 to 695 (SGKQCDSYPCKNKGLCKEGWNRFICDCTGTGYWSRTCE) folds into the EGF-like 2 domain. Laminin G-like domains follow at residues 700–872 (ILSY…IDFC) and 886–1061 (DPVT…ERGC). Cystine bridges form between cysteine 1033–cysteine 1061, cysteine 1077–cysteine 1088, cysteine 1082–cysteine 1097, and cysteine 1099–cysteine 1109. One can recognise an EGF-like 3 domain in the interval 1073 to 1110 (PSTTCQEDSCANMGICIQQWENYTCDCSMTSYTGTHCN). Residues 1114–1314 (TTYIFGKGGG…NPNIKINGSV (201 aa)) form the Laminin G-like 6 domain. Disordered regions lie at residues 1345 to 1366 (TMST…TDDM), 1442 to 1479 (LSDG…NLPP), and 1520 to 1557 (PNKV…KMNH). Residues 1446–1461 (GSDDCGDDDDDDDDDG) are compositionally biased toward acidic residues. Positions 1527–1547 (GRTTTASFSPKLSRSTTTSTP) are enriched in polar residues. The helical transmembrane segment at 1623 to 1643 (GMVVGIVAAAALCILILLYAM) threads the bilayer. The Cytoplasmic segment spans residues 1644 to 1697 (YKYRNRDEGSYQVDETRNYITNSAQSNGAVMKDKQQSTKSGNKKQKNKDKEYYV). Positions 1665 to 1697 (NSAQSNGAVMKDKQQSTKSGNKKQKNKDKEYYV) are disordered.

Belongs to the neurexin family.

It localises to the membrane. In terms of biological role, neuronal cell surface protein that may be involved in cell recognition and cell adhesion. The chain is Neurexin-3a (nrxn3a) from Danio rerio (Zebrafish).